The primary structure comprises 125 residues: DNA-directed RNA polymerase I subunit RPA12 (125 aa).

Residues 1-60 form an interaction with RPA2 region; the sequence is MSVVGSLIFCLDCGDLLENPNAVLGSNVECSQCKAIYPKSQFSNLKVVTTTADDAFPSSL. The necessary and sufficient for recruitment into Pol I stretch occupies residues 1–69; the sequence is MSVVGSLIFC…LRAKKSVVKT (69 aa). Zn(2+)-binding residues include cysteine 10, cysteine 13, cysteine 30, cysteine 33, cysteine 86, cysteine 89, cysteine 114, and cysteine 117. The C4-type zinc-finger motif lies at 10 to 33; it reads CLDCGDLLENPNAVLGSNVECSQC. A required for RNA cleavage, but not essential for elongation activity region spans residues 79–125; that stretch reads GATIKEKCPQCGNEEMNYHTLQLRSADEGATVFYTCTSCGYKFRTNN. The segment at 82-122 adopts a TFIIS-type zinc-finger fold; that stretch reads IKEKCPQCGNEEMNYHTLQLRSADEGATVFYTCTSCGYKFR.

It belongs to the archaeal RpoM/eukaryotic RPA12/RPB9/RPC11 RNA polymerase family. As to quaternary structure, component of the RNA polymerase I (Pol I) complex consisting of 14 subunits: RPA135, RPA190, RPC40, RPA14, RPB5, RPO26, RPA43, RPB8, RPA12, RPB10, RPC19, RPC10, RPA49 and RPA34. The complex is composed of a horseshoe-shaped core containing ten subunits (RPA135, RPA190, RPB5, RPO26, RPB8, RPB10, RPC10, RPA12, RPC19 and RPC40) where RPA135 and RPA190 form the DNA-binding cleft. Outside of the core, RPA14 and RPA43 form the stalk that mediates interactions with transcription initiation factors and newly synthesized RNA. Interacts with RPA2/RPA135. Peripheral subunit that binds the catalytic zinc ion that is required for RNA cleavage. The heterodimer formed by RPA34 and RPA49 stabilizes subunit RPA12 and stimulates RPA12-dependent RNA cleavage. Involved in the recruitment of RPA49 to Pol I.

The protein localises to the nucleus. The protein resides in the nucleolus. Functionally, DNA-dependent RNA polymerases catalyze the transcription of DNA into RNA using the four ribonucleoside triphosphates as substrates. Component of RNA polymerase I (Pol I) which synthesizes ribosomal RNA precursors. Besides, RNA polymerase I has intrinsic RNA cleavage activity. Proposed to contribute to the polymerase catalytic activity and form the polymerase active center together with the two largest subunits. Subunit RPA12 contributes a catalytic zinc ribbon that is required for RNA cleavage by Pol I. Involved in transcriptional termination. This is DNA-directed RNA polymerase I subunit RPA12 (RPA12) from Saccharomyces cerevisiae (strain ATCC 204508 / S288c) (Baker's yeast).